Reading from the N-terminus, the 93-residue chain is MDDKKDNRHLSKPAYREECTGDTERSTTAYMDILEDVSTGSTSKLPLEAKFVKISNNISEKENLPKEKEIGGVKGLEPTRYGDWQHKGKVTDF.

The interval 1 to 24 (MDDKKDNRHLSKPAYREECTGDTE) is disordered. Residues 8–55 (RHLSKPAYREECTGDTERSTTAYMDILEDVSTGSTSKLPLEAKFVKIS) enclose the RPE1 insert domain.

The protein belongs to the SDHAF4 family.

In Rickettsia conorii (strain ATCC VR-613 / Malish 7), this protein is UPF0369 protein RC0209.